The following is an 88-amino-acid chain: EMBRYO SURROUNDING FACTOR 1-like protein 11 (88 aa).

The first 23 residues, 1 to 23 (MISSSHFAIFCIILVSLFALQQY), serve as a signal peptide directing secretion. Intrachain disulfides connect cysteine 44–cysteine 59, cysteine 49–cysteine 78, cysteine 57–cysteine 74, and cysteine 60–cysteine 67.

This sequence belongs to the MEG family. Expressed in stems.

The chain is EMBRYO SURROUNDING FACTOR 1-like protein 11 (ESFL11) from Arabidopsis thaliana (Mouse-ear cress).